The sequence spans 132 residues: L-ectoine synthase (132 aa).

Belongs to the ectoine synthase family.

It catalyses the reaction (2S)-4-acetamido-2-aminobutanoate = L-ectoine + H2O. Its pathway is amine and polyamine biosynthesis; ectoine biosynthesis; L-ectoine from L-aspartate 4-semialdehyde: step 3/3. Functionally, catalyzes the circularization of gamma-N-acetyl-alpha,gamma-diaminobutyric acid (ADABA) to ectoine (1,4,5,6-tetrahydro-2-methyl-4-pyrimidine carboxylic acid), which is an excellent osmoprotectant. This chain is L-ectoine synthase, found in Rhodococcus jostii (strain RHA1).